Reading from the N-terminus, the 165-residue chain is Glutamyl-tRNA(Gln) amidotransferase subunit F, mitochondrial (165 aa).

Basic and acidic residues predominate over residues 137 to 153 (VSDQRGERGFDTSELRT). Positions 137–165 (VSDQRGERGFDTSELRTRINRAKSTAEKE) are disordered.

Belongs to the GatF family. Subunit of the heterotrimeric GatFAB amidotransferase (AdT) complex, composed of A, B and F subunits.

The protein localises to the mitochondrion inner membrane. It carries out the reaction L-glutamyl-tRNA(Gln) + L-glutamine + ATP + H2O = L-glutaminyl-tRNA(Gln) + L-glutamate + ADP + phosphate + H(+). Allows the formation of correctly charged Gln-tRNA(Gln) through the transamidation of misacylated Glu-tRNA(Gln) in the mitochondria. The reaction takes place in the presence of glutamine and ATP through an activated gamma-phospho-Glu-tRNA(Gln). Required for proper protein synthesis within the mitochondrion. The chain is Glutamyl-tRNA(Gln) amidotransferase subunit F, mitochondrial from Clavispora lusitaniae (strain ATCC 42720) (Yeast).